A 644-amino-acid chain; its full sequence is 2-isopropylmalate synthase (644 aa).

The segment at 1–40 (MTTSESPDAYTESFGAHTIVKPAGPPRVGQPSWNPQRASS) is disordered. The segment covering 31 to 40 (PSWNPQRASS) has biased composition (polar residues). The 275-residue stretch at 72–346 (PLWCAVDLRD…DPQIDFSNID (275 aa)) folds into the Pyruvate carboxyltransferase domain. The Mg(2+) site is built by aspartate 81, histidine 285, histidine 287, and asparagine 321. The tract at residues 491 to 644 (PVRPLERIRQ…VVSAVNRAAR (154 aa)) is regulatory domain. Residues 575–593 (VTIASPAQPGEAGRHASDP) form a VNTR1 repeat. The tract at residues 581–612 (AQPGEAGRHASDPVTIASPAQPGEAGRHASDP) is disordered. Residues 594–612 (VTIASPAQPGEAGRHASDP) form a VNTR2 repeat.

Belongs to the alpha-IPM synthase/homocitrate synthase family. LeuA type 2 subfamily. Homodimer. It depends on Mg(2+) as a cofactor.

It is found in the cytoplasm. It carries out the reaction 3-methyl-2-oxobutanoate + acetyl-CoA + H2O = (2S)-2-isopropylmalate + CoA + H(+). It participates in amino-acid biosynthesis; L-leucine biosynthesis; L-leucine from 3-methyl-2-oxobutanoate: step 1/4. Catalyzes the condensation of the acetyl group of acetyl-CoA with 3-methyl-2-oxobutanoate (2-ketoisovalerate) to form 3-carboxy-3-hydroxy-4-methylpentanoate (2-isopropylmalate). This chain is 2-isopropylmalate synthase, found in Mycobacterium tuberculosis (strain CDC 1551 / Oshkosh).